We begin with the raw amino-acid sequence, 1169 residues long: ATP-dependent helicase/deoxyribonuclease subunit B (1169 aa).

In terms of domain architecture, UvrD-like helicase ATP-binding spans 1 to 285 (MEIQFLAGRS…TIFERNHRHL (285 aa)). 8–15 (GRSGSGKT) is an ATP binding site. The UvrD-like helicase C-terminal domain maps to 280 to 586 (RNHRHLYTPD…KFALIPPSLD (307 aa)). Residues cysteine 801, cysteine 1121, cysteine 1124, and cysteine 1130 each coordinate [4Fe-4S] cluster.

It belongs to the helicase family. AddB/RexB type 1 subfamily. As to quaternary structure, heterodimer of AddA and AddB. Requires Mg(2+) as cofactor. The cofactor is [4Fe-4S] cluster.

Its function is as follows. The heterodimer acts as both an ATP-dependent DNA helicase and an ATP-dependent, dual-direction single-stranded exonuclease. Recognizes the chi site generating a DNA molecule suitable for the initiation of homologous recombination. The AddB subunit has 5' -&gt; 3' nuclease activity but not helicase activity. The polypeptide is ATP-dependent helicase/deoxyribonuclease subunit B (Bacillus pumilus (strain SAFR-032)).